Reading from the N-terminus, the 263-residue chain is Heat-labile enterotoxin IIB, A chain (263 aa).

The N-terminal stretch at 1–20 (MAKVISFFISLFLISFPLYA) is a signal peptide. 26–39 (ADSRTPDEVRRSGG) contacts NAD(+). Glu-130 is an active-site residue. Cys-205 and Cys-217 are oxidised to a cystine.

Belongs to the enterotoxin A family. Heterohexamer of one A chain and of five B chains.

Functionally, the biological activity of the toxin is produced by the A chain, which activates intracellular adenyl cyclase. In Escherichia coli, this protein is Heat-labile enterotoxin IIB, A chain.